The primary structure comprises 607 residues: ATP-dependent RNA helicase DBP6 (607 aa).

The interval 1–83 (MFAARFDPSR…GTGEADKRHQ (83 aa)) is disordered. Over residues 34–59 (QDESESEMSSAESEDEAMQLDDEEEV) the composition is skewed to acidic residues. Over residues 60–69 (VDSKGKENHG) the composition is skewed to basic and acidic residues. The short motif at 184 to 192 (AFPIQTALL) is the Q motif element. A Helicase ATP-binding domain is found at 208–388 (RYYTRKVGDI…DLQLHNPKLF (181 aa)). 221–228 (ASTGSGKT) provides a ligand contact to ATP. The short motif at 328-331 (DEAD) is the DEAD box element. The Helicase C-terminal domain occupies 419–578 (ILLRLLPLLS…GSHLFFDEEQ (160 aa)).

This sequence belongs to the DEAD box helicase family. DDX51/DBP6 subfamily. In terms of assembly, associated with pre-ribosomal particles.

The protein resides in the nucleus. It localises to the nucleolus. It carries out the reaction ATP + H2O = ADP + phosphate + H(+). In terms of biological role, ATP-binding RNA helicase involved in the biogenesis of 60S ribosomal subunits and is required for the normal formation of 25S and 5.8S rRNAs. This is ATP-dependent RNA helicase DBP6 (DBP6) from Eremothecium gossypii (strain ATCC 10895 / CBS 109.51 / FGSC 9923 / NRRL Y-1056) (Yeast).